The primary structure comprises 145 residues: uncharacterized protein (145 aa).

The protein belongs to the SAP18 family.

The protein resides in the cytoplasm. Its subcellular location is the nucleus. This is an uncharacterized protein from Schizosaccharomyces pombe (strain 972 / ATCC 24843) (Fission yeast).